A 61-amino-acid polypeptide reads, in one-letter code: uncharacterized protein (61 aa).

The next 2 membrane-spanning stretches (helical) occupy residues isoleucine 4–methionine 24 and serine 34–methionine 54.

The protein localises to the cell membrane. This is an uncharacterized protein from Bacillus subtilis (strain 168).